Here is a 152-residue protein sequence, read N- to C-terminus: uncharacterized protein (152 aa).

The protein belongs to the IIV-6 145L family.

This is an uncharacterized protein from Invertebrate iridescent virus 3 (IIV-3).